Here is a 913-residue protein sequence, read N- to C-terminus: Protein translocase subunit SecA (913 aa).

Residues glutamine 87, 105-109, and aspartate 512 each bind ATP; that span reads GEGKT. A disordered region spans residues 864–913; it reads LDQPEEEPAEVEGQPDVAVASVRTEPKIGRNEPCPCGSGKKYKHCHGQVQ. Zn(2+) contacts are provided by cysteine 897, cysteine 899, cysteine 908, and histidine 909. A compositionally biased stretch (basic residues) spans 903 to 913; the sequence is KKYKHCHGQVQ.

The protein belongs to the SecA family. As to quaternary structure, monomer and homodimer. Part of the essential Sec protein translocation apparatus which comprises SecA, SecYEG and auxiliary proteins SecDF-YajC and YidC. Requires Zn(2+) as cofactor.

Its subcellular location is the cell inner membrane. It localises to the cytoplasm. It carries out the reaction ATP + H2O + cellular proteinSide 1 = ADP + phosphate + cellular proteinSide 2.. Part of the Sec protein translocase complex. Interacts with the SecYEG preprotein conducting channel. Has a central role in coupling the hydrolysis of ATP to the transfer of proteins into and across the cell membrane, serving both as a receptor for the preprotein-SecB complex and as an ATP-driven molecular motor driving the stepwise translocation of polypeptide chains across the membrane. The protein is Protein translocase subunit SecA of Stutzerimonas stutzeri (strain A1501) (Pseudomonas stutzeri).